Here is a 360-residue protein sequence, read N- to C-terminus: WD repeat domain phosphoinositide-interacting protein 4 (360 aa).

WD repeat units follow at residues 1–34, 40–84, 92–128, 133–174, 183–222, 227–266, and 284–329; these read MTQQ…IYNV, KGHL…IWDD, KEKL…VYSF, RKLF…LVDL, SAPF…LFDT, KLVE…IFAL, and GPMI…ICVD. The L/FRRG motif motif lies at 231–234; sequence LRRG.

The protein belongs to the WD repeat PROPPIN family. As to quaternary structure, interacts with WIPI1. Interacts with WIPI2. Interacts with ATG2A and ATG2B. Interacts with ULK1. May interact with the PRKAA1, PRKAA2, PRKAB1 and PRKAG1 subunits of the AMPK kinase. May interact with NUDC. Ubiquitously expressed, with high expression in skeletal muscle and heart. Weakly expressed in liver and placenta. Expression is down-regulated in pancreatic and in kidney tumors.

Its subcellular location is the preautophagosomal structure. It is found in the cytoplasm. Its activity is regulated as follows. Activated upon amino-acid starvation. Functionally, component of the autophagy machinery that controls the major intracellular degradation process by which cytoplasmic materials are packaged into autophagosomes and delivered to lysosomes for degradation. Binds phosphatidylinositol 3-phosphate (PtdIns3P). Activated by the STK11/AMPK signaling pathway upon starvation, WDR45 is involved in autophagosome assembly downstream of WIPI2, regulating the size of forming autophagosomes. Together with WIPI1, promotes ATG2 (ATG2A or ATG2B)-mediated lipid transfer by enhancing ATG2-association with phosphatidylinositol 3-monophosphate (PI3P)-containing membranes. Probably recruited to membranes through its PtdIns3P activity. The chain is WD repeat domain phosphoinositide-interacting protein 4 (WDR45) from Homo sapiens (Human).